Here is a 554-residue protein sequence, read N- to C-terminus: Phenylalanine--tRNA ligase beta subunit (554 aa).

The 76-residue stretch at 276–351 (LTPKSRIISV…INYGYEKFDG (76 aa)) folds into the B5 domain. Residues D329, D335, E338, and E339 each contribute to the Mg(2+) site.

Belongs to the phenylalanyl-tRNA synthetase beta subunit family. Type 2 subfamily. As to quaternary structure, tetramer of two alpha and two beta subunits. It depends on Mg(2+) as a cofactor.

The protein resides in the cytoplasm. The catalysed reaction is tRNA(Phe) + L-phenylalanine + ATP = L-phenylalanyl-tRNA(Phe) + AMP + diphosphate + H(+). This Methanococcus maripaludis (strain DSM 14266 / JCM 13030 / NBRC 101832 / S2 / LL) protein is Phenylalanine--tRNA ligase beta subunit.